The chain runs to 102 residues: Protein isd11 (102 aa).

The protein belongs to the complex I LYR family.

The protein resides in the mitochondrion. In terms of biological role, required for mitochondrial iron-sulfur (Fe-S) protein biosynthesis. In Schizosaccharomyces pombe (strain 972 / ATCC 24843) (Fission yeast), this protein is Protein isd11 (isd11).